The chain runs to 159 residues: Cyclic pyranopterin monophosphate synthase (159 aa).

Substrate contacts are provided by residues 76–78 and 114–115; these read LCH and ME. The active site involves aspartate 129.

Belongs to the MoaC family. In terms of assembly, homohexamer; trimer of dimers.

The enzyme catalyses (8S)-3',8-cyclo-7,8-dihydroguanosine 5'-triphosphate = cyclic pyranopterin phosphate + diphosphate. The protein operates within cofactor biosynthesis; molybdopterin biosynthesis. In terms of biological role, catalyzes the conversion of (8S)-3',8-cyclo-7,8-dihydroguanosine 5'-triphosphate to cyclic pyranopterin monophosphate (cPMP). This is Cyclic pyranopterin monophosphate synthase from Shewanella oneidensis (strain ATCC 700550 / JCM 31522 / CIP 106686 / LMG 19005 / NCIMB 14063 / MR-1).